The following is a 217-amino-acid chain: uncharacterized protein (217 aa).

Residues 59 to 76 (AQSTIQRTSSLPVPSSSN) are compositionally biased toward polar residues. 2 disordered regions span residues 59–105 (AQST…ETAN) and 124–217 (KKSL…HISK). Position 68 is a phosphoserine (Ser68). The residue at position 92 (Thr92) is a Phosphothreonine. Residues 124-135 (KKSLERRVREEQ) show a composition bias toward basic and acidic residues. The span at 136–147 (EEKTDNEDDNDV) shows a compositional bias: acidic residues. Residues 148–157 (EISTQESLEN) show a composition bias toward polar residues. Over residues 173 to 188 (LEDDIEGQEFSFDDQD) the composition is skewed to acidic residues. Residues 199-217 (WLSSQKQQGSPLTSDHISK) show a composition bias toward polar residues.

This is an uncharacterized protein from Schizosaccharomyces pombe (strain 972 / ATCC 24843) (Fission yeast).